We begin with the raw amino-acid sequence, 274 residues long: Large ribosomal subunit protein uL2 (274 aa).

Residues 221 to 274 form a disordered region; sequence RGTAMNPVDHPHGGGEGKNFGKHPVTPWGVQTKGKKTRSNKRTDKFIVRRRSKK.

This sequence belongs to the universal ribosomal protein uL2 family. In terms of assembly, part of the 50S ribosomal subunit. Forms a bridge to the 30S subunit in the 70S ribosome.

Functionally, one of the primary rRNA binding proteins. Required for association of the 30S and 50S subunits to form the 70S ribosome, for tRNA binding and peptide bond formation. It has been suggested to have peptidyltransferase activity; this is somewhat controversial. Makes several contacts with the 16S rRNA in the 70S ribosome. The polypeptide is Large ribosomal subunit protein uL2 (Serratia proteamaculans (strain 568)).